The sequence spans 563 residues: Beta-catenin-like protein 1 (563 aa).

M1 carries the N-acetylmethionine modification. Positions 1 to 81 are disordered; the sequence is MDVGELLSYQ…EEEEPLDESS (81 aa). The short motif at 16–33 is the Nuclear localization signal element; the sequence is KRPRDDEEEELKTRRKQT. Basic and acidic residues predominate over residues 34–45; it reads GPRERGRYREEE. Positions 66–78 are enriched in acidic residues; sequence DGEEEEEEEEPLD. HEAT repeat units lie at residues 79-129 and 134-176; these read ESSV…VVAT and YHLL…TLHE. K91 carries the N6-acetyllysine modification. The short motif at 130–140 is the Nuclear export signal (NES) element; that stretch reads MPDLYHLLVEL. 5 ARM repeats span residues 178 to 228, 229 to 273, 274 to 323, 325 to 363, and 364 to 417; these read EEGA…MAEF, RPEM…LQDN, DENR…CLML, SNRE…AMIG, and PEGT…LLRN. S389 carries the phosphoserine modification. Residues 476 to 540 are a coiled coil; sequence DMEDEFYLRR…HIIKEYAENI (65 aa). A Phosphoserine modification is found at S545.

Component of the PRP19-CDC5L splicing complex composed of a core complex comprising a homotetramer of PRPF19, CDC5L, PLRG1 and BCAS2, and at least three less stably associated proteins CTNNBL1, CWC15 and HSPA8. Interacts directly with CWC15 and CDC5L in the complex. Interacts with AICDA; the interaction is important for the antibody diversification activity of AICDA. Interacts with PRPF31 (via its NLS). Interacts (via its N-terminal NLS) with KPNA1 and KPNA2.

The protein localises to the nucleus. In terms of biological role, component of the PRP19-CDC5L complex that forms an integral part of the spliceosome and is required for activating pre-mRNA splicing. Participates in AID/AICDA-mediated somatic hypermutation (SHM) and class-switch recombination (CSR), 2 processes resulting in the production of high-affinity, mutated isotype-switched antibodies. The protein is Beta-catenin-like protein 1 (Ctnnbl1) of Mus musculus (Mouse).